We begin with the raw amino-acid sequence, 144 residues long: Large ribosomal subunit protein uL11 (144 aa).

This sequence belongs to the universal ribosomal protein uL11 family. In terms of assembly, part of the ribosomal stalk of the 50S ribosomal subunit. Interacts with L10 and the large rRNA to form the base of the stalk. L10 forms an elongated spine to which L12 dimers bind in a sequential fashion forming a multimeric L10(L12)X complex. One or more lysine residues are methylated.

Its function is as follows. Forms part of the ribosomal stalk which helps the ribosome interact with GTP-bound translation factors. The protein is Large ribosomal subunit protein uL11 of Neisseria meningitidis serogroup A / serotype 4A (strain DSM 15465 / Z2491).